A 100-amino-acid chain; its full sequence is Large ribosomal subunit protein uL23 (100 aa).

This sequence belongs to the universal ribosomal protein uL23 family. As to quaternary structure, part of the 50S ribosomal subunit. Contacts protein L29, and trigger factor when it is bound to the ribosome.

In terms of biological role, one of the early assembly proteins it binds 23S rRNA. One of the proteins that surrounds the polypeptide exit tunnel on the outside of the ribosome. Forms the main docking site for trigger factor binding to the ribosome. This Proteus mirabilis (strain HI4320) protein is Large ribosomal subunit protein uL23.